Reading from the N-terminus, the 156-residue chain is Small ribosomal subunit protein uS7 (156 aa).

This sequence belongs to the universal ribosomal protein uS7 family. In terms of assembly, part of the 30S ribosomal subunit. Contacts proteins S9 and S11.

Functionally, one of the primary rRNA binding proteins, it binds directly to 16S rRNA where it nucleates assembly of the head domain of the 30S subunit. Is located at the subunit interface close to the decoding center, probably blocks exit of the E-site tRNA. This is Small ribosomal subunit protein uS7 from Bacillus licheniformis (strain ATCC 14580 / DSM 13 / JCM 2505 / CCUG 7422 / NBRC 12200 / NCIMB 9375 / NCTC 10341 / NRRL NRS-1264 / Gibson 46).